Consider the following 450-residue polypeptide: UDP-N-acetylmuramoylalanine--D-glutamate ligase (450 aa).

119–125 (GSNGKTT) is a binding site for ATP.

Belongs to the MurCDEF family.

It is found in the cytoplasm. It catalyses the reaction UDP-N-acetyl-alpha-D-muramoyl-L-alanine + D-glutamate + ATP = UDP-N-acetyl-alpha-D-muramoyl-L-alanyl-D-glutamate + ADP + phosphate + H(+). Its pathway is cell wall biogenesis; peptidoglycan biosynthesis. Functionally, cell wall formation. Catalyzes the addition of glutamate to the nucleotide precursor UDP-N-acetylmuramoyl-L-alanine (UMA). In Bacillus anthracis (strain A0248), this protein is UDP-N-acetylmuramoylalanine--D-glutamate ligase.